Here is a 380-residue protein sequence, read N- to C-terminus: RNA-binding motif protein, Y chromosome (380 aa).

Residues 8 to 86 enclose the RRM domain; the sequence is GKIFIGGLNI…KRIKVKQARR (79 aa). Disordered regions lie at residues 82–226 and 279–358; these read KQAR…STSR and HEAP…YSAS. The span at 166-178 shows a compositional bias: polar residues; sequence RSATSAQTRSNTG. 2 stretches are compositionally biased toward basic and acidic residues: residues 180-190 and 333-351; these read RGREPHRREIS and IDREYFDREGRQERGHSPK.

Interacts with SRSF3/SRP20, SRSF9/SRP30, SRSF5/SRP40, and SRSF6/SRP55; this interaction inhibits SRSF family member pre-mRNA splicing. Interacts with splicing factor proteins and KHDRBS3. As to expression, testis-specific.

It localises to the nucleus. Functionally, RNA-binding protein involved in pre-mRNA splicing. Required for sperm development. Acts additively with TRA2B to promote exon 7 inclusion of the survival motor neuron SMN. Binds non-specifically to mRNAs. This Mus musculus (Mouse) protein is RNA-binding motif protein, Y chromosome.